The chain runs to 599 residues: 1-deoxy-D-xylulose-5-phosphate synthase (599 aa).

Residues H63 and 104-106 each bind thiamine diphosphate; that span reads GHS. D135 contributes to the Mg(2+) binding site. Residues 136-137, N164, Y271, and E352 contribute to the thiamine diphosphate site; that span reads GA. N164 lines the Mg(2+) pocket.

It belongs to the transketolase family. DXPS subfamily. Homodimer. Requires Mg(2+) as cofactor. Thiamine diphosphate serves as cofactor.

The enzyme catalyses D-glyceraldehyde 3-phosphate + pyruvate + H(+) = 1-deoxy-D-xylulose 5-phosphate + CO2. It participates in metabolic intermediate biosynthesis; 1-deoxy-D-xylulose 5-phosphate biosynthesis; 1-deoxy-D-xylulose 5-phosphate from D-glyceraldehyde 3-phosphate and pyruvate: step 1/1. Functionally, catalyzes the acyloin condensation reaction between C atoms 2 and 3 of pyruvate and glyceraldehyde 3-phosphate to yield 1-deoxy-D-xylulose-5-phosphate (DXP). This Nitratiruptor sp. (strain SB155-2) protein is 1-deoxy-D-xylulose-5-phosphate synthase.